Here is a 154-residue protein sequence, read N- to C-terminus: CS6 fimbrial subunit A (154 aa).

A signal peptide spans 1-18 (MKKTIGLILILASFGSHA).

It localises to the fimbrium. Its function is as follows. Fimbriae (also called pili), polar filaments radiating from the surface of the bacterium to a length of 0.5-1.5 micrometers and numbering 100-300 per cell, enable bacteria to colonize the epithelium of specific host organs. In Escherichia coli, this protein is CS6 fimbrial subunit A (cssA).